The sequence spans 652 residues: Beta-glucuronidase (652 aa).

Positions 1–22 (MVRGPAGAWAVLGPLLWGCGLA) are cleaved as a signal peptide. 2 N-linked (GlcNAc...) asparagine glycosylation sites follow: N173 and N420. E451 acts as the Proton donor in catalysis. An N-linked (GlcNAc...) asparagine glycan is attached at N631.

It belongs to the glycosyl hydrolase 2 family. In terms of assembly, homotetramer.

Its subcellular location is the lysosome. It carries out the reaction a beta-D-glucuronoside + H2O = D-glucuronate + an alcohol. Inhibited by L-aspartic acid. Functionally, plays an important role in the degradation of dermatan and keratan sulfates. The sequence is that of Beta-glucuronidase (GUSB) from Sus scrofa (Pig).